A 202-amino-acid polypeptide reads, in one-letter code: Translation initiation factor IF-3 (202 aa).

The protein belongs to the IF-3 family. Monomer.

The protein localises to the cytoplasm. Its function is as follows. IF-3 binds to the 30S ribosomal subunit and shifts the equilibrium between 70S ribosomes and their 50S and 30S subunits in favor of the free subunits, thus enhancing the availability of 30S subunits on which protein synthesis initiation begins. The chain is Translation initiation factor IF-3 from Prochlorococcus marinus (strain NATL2A).